The sequence spans 907 residues: Protein translocase subunit SecA (907 aa).

ATP-binding positions include Q87, 105 to 109 (GEGKT), and D510. 4 residues coordinate Zn(2+): C892, C894, C903, and H904.

Belongs to the SecA family. As to quaternary structure, monomer and homodimer. Part of the essential Sec protein translocation apparatus which comprises SecA, SecYEG and auxiliary proteins SecDF-YajC and YidC. It depends on Zn(2+) as a cofactor.

It is found in the cell inner membrane. It localises to the cytoplasm. It catalyses the reaction ATP + H2O + cellular proteinSide 1 = ADP + phosphate + cellular proteinSide 2.. Functionally, part of the Sec protein translocase complex. Interacts with the SecYEG preprotein conducting channel. Has a central role in coupling the hydrolysis of ATP to the transfer of proteins into and across the cell membrane, serving both as a receptor for the preprotein-SecB complex and as an ATP-driven molecular motor driving the stepwise translocation of polypeptide chains across the membrane. This Acinetobacter baumannii (strain AB0057) protein is Protein translocase subunit SecA.